A 1036-amino-acid polypeptide reads, in one-letter code: Isoleucine--tRNA ligase (1036 aa).

Residues 46–56 (PFATGLPHYGH) carry the 'HIGH' region motif. The short motif at 589 to 593 (KMSKR) is the 'KMSKS' region element. Lys-592 is an ATP binding site.

It belongs to the class-I aminoacyl-tRNA synthetase family. IleS type 2 subfamily. Monomer. Requires Zn(2+) as cofactor.

It is found in the cytoplasm. It catalyses the reaction tRNA(Ile) + L-isoleucine + ATP = L-isoleucyl-tRNA(Ile) + AMP + diphosphate. In terms of biological role, catalyzes the attachment of isoleucine to tRNA(Ile). As IleRS can inadvertently accommodate and process structurally similar amino acids such as valine, to avoid such errors it has two additional distinct tRNA(Ile)-dependent editing activities. One activity is designated as 'pretransfer' editing and involves the hydrolysis of activated Val-AMP. The other activity is designated 'posttransfer' editing and involves deacylation of mischarged Val-tRNA(Ile). The chain is Isoleucine--tRNA ligase from Chlamydia trachomatis serovar D (strain ATCC VR-885 / DSM 19411 / UW-3/Cx).